We begin with the raw amino-acid sequence, 287 residues long: ATP synthase gamma chain (287 aa).

The protein belongs to the ATPase gamma chain family. As to quaternary structure, F-type ATPases have 2 components, CF(1) - the catalytic core - and CF(0) - the membrane proton channel. CF(1) has five subunits: alpha(3), beta(3), gamma(1), delta(1), epsilon(1). CF(0) has three main subunits: a, b and c.

The protein resides in the cell inner membrane. Functionally, produces ATP from ADP in the presence of a proton gradient across the membrane. The gamma chain is believed to be important in regulating ATPase activity and the flow of protons through the CF(0) complex. The sequence is that of ATP synthase gamma chain from Citrobacter koseri (strain ATCC BAA-895 / CDC 4225-83 / SGSC4696).